Reading from the N-terminus, the 304-residue chain is Bifunctional protein FolD 3 (304 aa).

NADP(+) contacts are provided by residues 172 to 174 (GRS), Ser197, and Ile238.

It belongs to the tetrahydrofolate dehydrogenase/cyclohydrolase family. As to quaternary structure, homodimer.

It carries out the reaction (6R)-5,10-methylene-5,6,7,8-tetrahydrofolate + NADP(+) = (6R)-5,10-methenyltetrahydrofolate + NADPH. The enzyme catalyses (6R)-5,10-methenyltetrahydrofolate + H2O = (6R)-10-formyltetrahydrofolate + H(+). It participates in one-carbon metabolism; tetrahydrofolate interconversion. Its function is as follows. Catalyzes the oxidation of 5,10-methylenetetrahydrofolate to 5,10-methenyltetrahydrofolate and then the hydrolysis of 5,10-methenyltetrahydrofolate to 10-formyltetrahydrofolate. In Rhizorhabdus wittichii (strain DSM 6014 / CCUG 31198 / JCM 15750 / NBRC 105917 / EY 4224 / RW1) (Sphingomonas wittichii), this protein is Bifunctional protein FolD 3.